Here is a 239-residue protein sequence, read N- to C-terminus: Mitochondrial fission factor homolog B (239 aa).

Residues 1–219 (MAEINRMQYE…ENKERVKHEM (219 aa)) are Cytoplasmic-facing. The tract at residues 107-139 (EGPAPATPHSKEVRSSGHLKRDGLASENSLRQN) is disordered. Residues 115–130 (HSKEVRSSGHLKRDGL) are compositionally biased toward basic and acidic residues. A coiled-coil region spans residues 184–214 (DLALADAASLRRQIIKLNRRLLLLEEENKER). The chain crosses the membrane as a helical; Anchor for type IV membrane protein span at residues 220 to 237 (TMYSIIIIFGLLNSWLWF). Over 238 to 239 (RR) the chain is Extracellular.

Belongs to the Tango11 family.

The protein resides in the mitochondrion outer membrane. The protein localises to the peroxisome. In terms of biological role, plays a role in mitochondrial and peroxisomal fission. Promotes the recruitment and association of the fission mediator dynamin-related protein 1 (DNM1L) to the mitochondrial surface. This Xenopus laevis (African clawed frog) protein is Mitochondrial fission factor homolog B (mff-b).